We begin with the raw amino-acid sequence, 1037 residues long: Nucleoporin NUP120 (1037 aa).

Leucine-zipper regions lie at residues 131 to 152 (LQLP…WFHL) and 290 to 311 (LLPL…SGIL). Position 417 is a phosphothreonine (threonine 417).

As to quaternary structure, component of the nuclear pore complex (NPC). NPC constitutes the exclusive means of nucleocytoplasmic transport. NPCs allow the passive diffusion of ions and small molecules and the active, nuclear transport receptor-mediated bidirectional transport of macromolecules such as proteins, RNAs, ribonucleoparticles (RNPs), and ribosomal subunits across the nuclear envelope. Due to its 8-fold rotational symmetry, all subunits are present with 8 copies or multiples thereof. NUP120 is part of the heptameric 0.5 MDa autoassembling NUP84 NPC subcomplex (NUP84, NUP85, NUP120, NUP133, NUP145C, SEC13 and SEH1).

The protein resides in the nucleus. It localises to the nuclear pore complex. Its subcellular location is the nucleus membrane. Functions as a component of the nuclear pore complex (NPC). NPC components, collectively referred to as nucleoporins (NUPs), can play the role of both NPC structural components and of docking or interaction partners for transiently associated nuclear transport factors. NUP120 is involved in nuclear poly(A)+ RNA and pre-ribosome export, in GSP1 nuclear import, in NPC assembly and distribution, as well as in nuclear envelope organization. The chain is Nucleoporin NUP120 (NUP120) from Saccharomyces cerevisiae (strain ATCC 204508 / S288c) (Baker's yeast).